The following is an 85-amino-acid chain: MKVTLIAILTCAAVLVLHTTAAEELEAESQLVEVGMPDTELAAVDEERFFECSVSCEIEKEGNKDCKKKKCKGGWKCKFNMCVKV.

A signal peptide spans 1–22 (MKVTLIAILTCAAVLVLHTTAA). Positions 23–48 (EELEAESQLVEVGMPDTELAAVDEER) are excised as a propeptide. 3 disulfides stabilise this stretch: cysteine 52–cysteine 66, cysteine 56–cysteine 77, and cysteine 71–cysteine 82.

It belongs to the neurotoxin 12 (Hwtx-2) family. 02 (Hwtx-2) subfamily. In terms of tissue distribution, expressed by the venom gland.

The protein localises to the secreted. In terms of biological role, postsynaptic neurotoxin. The sequence is that of U4-theraphotoxin-Hhn1m from Cyriopagopus hainanus (Chinese bird spider).